A 340-amino-acid chain; its full sequence is HPr kinase/phosphorylase (340 aa).

Catalysis depends on residues His153 and Lys174. An ATP-binding site is contributed by Gly168 to Ser175. Ser175 lines the Mg(2+) pocket. The active-site Proton acceptor; for phosphorylation activity. Proton donor; for dephosphorylation activity is Asp192. The important for the catalytic mechanism of both phosphorylation and dephosphorylation stretch occupies residues Met216–Asp225. Glu217 contributes to the Mg(2+) binding site. Arg258 is an active-site residue. Residues Pro279–Lys284 form an important for the catalytic mechanism of dephosphorylation region.

This sequence belongs to the HPrK/P family. In terms of assembly, homohexamer. It depends on Mg(2+) as a cofactor.

It catalyses the reaction [HPr protein]-L-serine + ATP = [HPr protein]-O-phospho-L-serine + ADP + H(+). The enzyme catalyses [HPr protein]-O-phospho-L-serine + phosphate + H(+) = [HPr protein]-L-serine + diphosphate. Functionally, catalyzes the ATP- as well as the pyrophosphate-dependent phosphorylation of a specific serine residue in HPr, a phosphocarrier protein of the phosphoenolpyruvate-dependent sugar phosphotransferase system (PTS). HprK/P also catalyzes the pyrophosphate-producing, inorganic phosphate-dependent dephosphorylation (phosphorolysis) of seryl-phosphorylated HPr (P-Ser-HPr). The polypeptide is HPr kinase/phosphorylase (Prosthecochloris aestuarii (strain DSM 271 / SK 413)).